We begin with the raw amino-acid sequence, 164 residues long: ATP synthase subunit b (164 aa).

The chain crosses the membrane as a helical span at residues 6–26; it reads GELVGNFILVTGSVIVLLLLI.

The protein belongs to the ATPase B chain family. As to quaternary structure, F-type ATPases have 2 components, F(1) - the catalytic core - and F(0) - the membrane proton channel. F(1) has five subunits: alpha(3), beta(3), gamma(1), delta(1), epsilon(1). F(0) has three main subunits: a(1), b(2) and c(10-14). The alpha and beta chains form an alternating ring which encloses part of the gamma chain. F(1) is attached to F(0) by a central stalk formed by the gamma and epsilon chains, while a peripheral stalk is formed by the delta and b chains.

The protein resides in the cell membrane. In terms of biological role, f(1)F(0) ATP synthase produces ATP from ADP in the presence of a proton or sodium gradient. F-type ATPases consist of two structural domains, F(1) containing the extramembraneous catalytic core and F(0) containing the membrane proton channel, linked together by a central stalk and a peripheral stalk. During catalysis, ATP synthesis in the catalytic domain of F(1) is coupled via a rotary mechanism of the central stalk subunits to proton translocation. Its function is as follows. Component of the F(0) channel, it forms part of the peripheral stalk, linking F(1) to F(0). In Streptococcus pyogenes serotype M6 (strain ATCC BAA-946 / MGAS10394), this protein is ATP synthase subunit b.